The primary structure comprises 810 residues: S-adenosyl-L-methionine-dependent tRNA 4-demethylwyosine synthase (810 aa).

Disordered stretches follow at residues 86 to 116 and 156 to 176; these read NGGG…KGGC and RSST…VGKK. Residues 104–116 show a composition bias toward low complexity; that stretch reads GCCSSKGGKKGGC. Residues 159-172 show a composition bias toward polar residues; the sequence is TPKVFSKNSSSNSR. The 156-residue stretch at 205–360 folds into the Flavodoxin-like domain; that stretch reads IYVLYSSLQG…KIDEWTSLLA (156 aa). FMN is bound by residues 211–215 and 304–337; these read SLQGA and VLGL…RRIF. The segment covering 374-397 has biased composition (acidic residues); that stretch reads DENADSEEDEEEGNGSDELGDVED. The tract at residues 374–407 is disordered; it reads DENADSEEDEEEGNGSDELGDVEDIGGKGSNGKF. The region spanning 463–713 is the Radical SAM core domain; it reads FNIASSRCME…ELQRRGLHYD (251 aa). [4Fe-4S] cluster contacts are provided by C479, C483, and C486. A Glycyl lysine isopeptide (Lys-Gly) (interchain with G-Cter in ubiquitin) cross-link involves residue K496. Residues 782-810 form a disordered region; that stretch reads RVYRKDKKKQNKENQETTTRETPLPPIPA.

Belongs to the TYW1 family. [4Fe-4S] cluster is required as a cofactor.

It localises to the endoplasmic reticulum. It catalyses the reaction N(1)-methylguanosine(37) in tRNA(Phe) + pyruvate + S-adenosyl-L-methionine = 4-demethylwyosine(37) in tRNA(Phe) + 5'-deoxyadenosine + L-methionine + CO2 + H2O. It participates in tRNA modification; wybutosine-tRNA(Phe) biosynthesis. In terms of biological role, component of the wybutosine biosynthesis pathway. Wybutosine is a hyper modified guanosine with a tricyclic base found at the 3'-position adjacent to the anticodon of eukaryotic phenylalanine tRNA. Catalyzes the condensation of N-methylguanine with 2 carbon atoms from pyruvate to form the tricyclic 4-demethylwyosine, an intermediate in wybutosine biosynthesis. This is S-adenosyl-L-methionine-dependent tRNA 4-demethylwyosine synthase (TYW1) from Saccharomyces cerevisiae (strain ATCC 204508 / S288c) (Baker's yeast).